Consider the following 311-residue polypeptide: Porphobilinogen deaminase (311 aa).

Cys241 bears the S-(dipyrrolylmethanemethyl)cysteine mark.

Belongs to the HMBS family. Monomer. Dipyrromethane is required as a cofactor.

It carries out the reaction 4 porphobilinogen + H2O = hydroxymethylbilane + 4 NH4(+). The protein operates within porphyrin-containing compound metabolism; protoporphyrin-IX biosynthesis; coproporphyrinogen-III from 5-aminolevulinate: step 2/4. Functionally, tetrapolymerization of the monopyrrole PBG into the hydroxymethylbilane pre-uroporphyrinogen in several discrete steps. The chain is Porphobilinogen deaminase from Carboxydothermus hydrogenoformans (strain ATCC BAA-161 / DSM 6008 / Z-2901).